A 525-amino-acid chain; its full sequence is ALBINO3-like protein 2, chloroplastic (525 aa).

A run of 4 helical transmembrane segments spans residues 99–119 (WMIIASSTVAVRLALLPLLIL), 167–187 (LWFFPYLSVQLPCFFLLMASI), 217–237 (FGPVFPILIATFHYINIQISF), and 262–282 (ILSVPLFFVGYAIPQGSLVYW). TPR repeat units lie at residues 346–379 (PEELLSLSVQVLSKGDKETSIQLLRLALEKDPGY), 380–413 (VRGLVLMGQALLQKTQLSEATEYLELAISKLLDE), 425–458 (MLASQWAGAAYVQQGKLKSGIIHLERVAKLREPG), and 467–500 (FEALLLLSSALYKEGQSDEAAKILRVVVDHNPAY).

Belongs to the OXA1/ALB3/YidC (TC 2.A.9.2) family.

Its subcellular location is the plastid. It localises to the chloroplast thylakoid membrane. Functionally, probably required for the insertion of integral membrane proteins into the chloroplast thylakoid membranes. The polypeptide is ALBINO3-like protein 2, chloroplastic (ALB3L2) (Arabidopsis thaliana (Mouse-ear cress)).